The following is a 435-amino-acid chain: Adenylosuccinate lyase (435 aa).

Residues 4-5, 73-75, and 99-100 contribute to the N(6)-(1,2-dicarboxyethyl)-AMP site; these read RY, RHD, and TS. Catalysis depends on His147, which acts as the Proton donor/acceptor. Gln218 provides a ligand contact to N(6)-(1,2-dicarboxyethyl)-AMP. Residue Ser268 is the Proton donor/acceptor of the active site. N(6)-(1,2-dicarboxyethyl)-AMP is bound by residues Ser269, 274–276, Asn282, and 313–317; these read KKN and SAERV.

Belongs to the lyase 1 family. Adenylosuccinate lyase subfamily. Homotetramer. Residues from neighboring subunits contribute catalytic and substrate-binding residues to each active site.

It carries out the reaction N(6)-(1,2-dicarboxyethyl)-AMP = fumarate + AMP. The enzyme catalyses (2S)-2-[5-amino-1-(5-phospho-beta-D-ribosyl)imidazole-4-carboxamido]succinate = 5-amino-1-(5-phospho-beta-D-ribosyl)imidazole-4-carboxamide + fumarate. It participates in purine metabolism; AMP biosynthesis via de novo pathway; AMP from IMP: step 2/2. Its pathway is purine metabolism; IMP biosynthesis via de novo pathway; 5-amino-1-(5-phospho-D-ribosyl)imidazole-4-carboxamide from 5-amino-1-(5-phospho-D-ribosyl)imidazole-4-carboxylate: step 2/2. Catalyzes two reactions in de novo purine nucleotide biosynthesis. Catalyzes the breakdown of 5-aminoimidazole- (N-succinylocarboxamide) ribotide (SAICAR or 2-[5-amino-1-(5-phospho-beta-D-ribosyl)imidazole-4-carboxamido]succinate) to 5-aminoimidazole-4-carboxamide ribotide (AICAR or 5-amino-1-(5-phospho-beta-D-ribosyl)imidazole-4-carboxamide) and fumarate, and of adenylosuccinate (ADS or N(6)-(1,2-dicarboxyethyl)-AMP) to adenosine monophosphate (AMP) and fumarate. The protein is Adenylosuccinate lyase (purB) of Deinococcus radiodurans (strain ATCC 13939 / DSM 20539 / JCM 16871 / CCUG 27074 / LMG 4051 / NBRC 15346 / NCIMB 9279 / VKM B-1422 / R1).